The chain runs to 543 residues: Chaperonin GroEL 2 (543 aa).

Residues Thr29–Pro32, Asp86–Thr90, Gly413, Asp477–Ala479, and Asp493 contribute to the ATP site. The disordered stretch occupies residues Pro523–Phe543. Basic residues predominate over residues Gly534–Phe543.

The protein belongs to the chaperonin (HSP60) family. In terms of assembly, forms a cylinder of 14 subunits composed of two heptameric rings stacked back-to-back. Interacts with the co-chaperonin GroES.

It is found in the cytoplasm. It carries out the reaction ATP + H2O + a folded polypeptide = ADP + phosphate + an unfolded polypeptide.. Its function is as follows. Together with its co-chaperonin GroES, plays an essential role in assisting protein folding. The GroEL-GroES system forms a nano-cage that allows encapsulation of the non-native substrate proteins and provides a physical environment optimized to promote and accelerate protein folding. This Salinispora tropica (strain ATCC BAA-916 / DSM 44818 / JCM 13857 / NBRC 105044 / CNB-440) protein is Chaperonin GroEL 2.